The sequence spans 87 residues: Conotoxin QcMNCL-XIII0.1 (87 aa).

Positions Met-1 to Ala-18 are cleaved as a signal peptide. Positions Leu-19–Arg-34 are excised as a propeptide.

In terms of processing, contains 4 disulfide bonds. Expressed by the venom duct.

Its subcellular location is the secreted. May interact and inhibit Cav3.1/CACNA1G calcium channels. In a ex vivo model, shows ability to block nerve signal transduction. This chain is Conotoxin QcMNCL-XIII0.1, found in Conus quercinus (Oak cone).